A 92-amino-acid polypeptide reads, in one-letter code: MKPIQKLLAGLILLTWCVEGCSSQHWSYGLRPGGKRDAENLIDSFQEIVKEVGQLAETQRFECTTHQPRSPLRDLKGALESLIEEETGQKKI.

A signal peptide spans 1–23 (MKPIQKLLAGLILLTWCVEGCSS). Residue Gln24 is modified to Pyrrolidone carboxylic acid. Gly33 is subject to Glycine amide.

Belongs to the GnRH family. Post-translationally, the precursor is cleaved by ACE, which removes the Gly-Lys-Arg peptide at the C-terminus, leading to mature hormone. The mature form of Gonadoliberin-1 is also cleaved and degraded by ACE.

The protein resides in the secreted. In terms of biological role, stimulates the secretion of gonadotropins; it stimulates the secretion of both luteinizing and follicle-stimulating hormones. The polypeptide is Progonadoliberin-1 (GNRH1) (Homo sapiens (Human)).